The chain runs to 543 residues: Adenosine deaminase 2 (543 aa).

A signal peptide spans 1-26 (MFLKFKNIFFIVLTLSIVFNGLIVNS). The span at 31–54 (INNKNNNNNNNNKDLSSSESGSSS) shows a compositional bias: low complexity. The interval 31-58 (INNKNNNNNNNNKDLSSSESGSSSDINP) is disordered. An N-linked (GlcNAc...) asparagine glycan is attached at N126. Residues H144 and H146 each coordinate Zn(2+). The N-linked (GlcNAc...) asparagine glycan is linked to N179. 232–239 (WRKFDGIF) provides a ligand contact to substrate. Residues N309 and N326 are each glycosylated (N-linked (GlcNAc...) asparagine). G355 serves as a coordination point for substrate. H389 provides a ligand contact to Zn(2+). E392 acts as the Proton donor in catalysis. Residue N397 is glycosylated (N-linked (GlcNAc...) asparagine). H414 functions as the Proton acceptor in the catalytic mechanism. D471 is a Zn(2+) binding site. Substrate is bound at residue D472. N-linked (GlcNAc...) asparagine glycosylation is found at N508 and N514.

Belongs to the metallo-dependent hydrolases superfamily. Adenosine and AMP deaminases family. ADGF subfamily. It depends on Zn(2+) as a cofactor.

Its subcellular location is the secreted. The enzyme catalyses adenosine + H2O + H(+) = inosine + NH4(+). Adenosine deaminase that may contribute to the degradation of extracellular adenosine, a signaling molecule that controls a variety of cellular responses. May play a role in the regulation of cell proliferation. The sequence is that of Adenosine deaminase 2 from Dictyostelium discoideum (Social amoeba).